Here is a 168-residue protein sequence, read N- to C-terminus: MSEQKQDVAATEQQPVLQIQRIYVKDVSFEAPNLPHIFQQEWKPKLGFDLSTETTQVGDDLYEVVLNISVETTLEDSGDVAFICEVKQAGVFTISGLEDVQMAHCLTSQCPNMLFPYARELVSNLVNRGTFPALNLSPVNFDALFVEYMNRQQAENAEEKSEEEQTKH.

Belongs to the SecB family. As to quaternary structure, homotetramer, a dimer of dimers. One homotetramer interacts with 1 SecA dimer.

The protein resides in the cytoplasm. Its function is as follows. One of the proteins required for the normal export of preproteins out of the cell cytoplasm. It is a molecular chaperone that binds to a subset of precursor proteins, maintaining them in a translocation-competent state. It also specifically binds to its receptor SecA. This chain is Protein-export protein SecB, found in Haemophilus influenzae (strain PittGG).